The primary structure comprises 377 residues: Probable dehydratase NIT22 (377 aa).

Positions 101 and 196 each coordinate NADP(+). The segment at 220–243 (ERGPKMNEHVPSTPPRRPDAVSSF) is disordered. The MaoC-like domain maps to 233–332 (PPRRPDAVSS…ILMWDMGLCK (100 aa)). NADP(+) contacts are provided by Thr-265 and Ile-287.

This sequence belongs to the short-chain dehydrogenases/reductases (SDR) family.

Its pathway is siderophore biosynthesis. Its function is as follows. Probable dehydratase; part of the gene cluster that mediates the biosynthesis of hydroxamate-containing siderophores that play a critical role in virulence via intracellular iron acquisition during macrophage infection. The sequence is that of Probable dehydratase NIT22 from Ajellomyces capsulatus (Darling's disease fungus).